Consider the following 160-residue polypeptide: Globin CTT-II beta (160 aa).

The N-terminal stretch at 1 to 15 is a signal peptide; the sequence is MKFLVLALCIAAAVA. A Globin domain is found at 17 to 160; it reads PLSADEASLV…NVFNMMFSYL (144 aa). 2 residues coordinate heme b: His75 and His110.

This sequence belongs to the globin family. Homodimer.

This chain is Globin CTT-II beta, found in Chironomus thummi thummi (Midge).